The primary structure comprises 105 residues: Pyruvate synthase subunit PorD (105 aa).

4Fe-4S ferredoxin-type domains follow at residues 44 to 73 and 74 to 103; these read FKPEFNRDKCVRCYLCYIYCPEPAIYLDEE and GYPVFDYDYCKGCGICANECPTKAIEMVRE. 8 residues coordinate [4Fe-4S] cluster: Cys53, Cys56, Cys59, Cys63, Cys83, Cys86, Cys89, and Cys93.

Heterotetramer of one alpha, one beta, one delta and one gamma chain. Requires [4Fe-4S] cluster as cofactor.

The protein is Pyruvate synthase subunit PorD (porD) of Pyrococcus furiosus (strain ATCC 43587 / DSM 3638 / JCM 8422 / Vc1).